We begin with the raw amino-acid sequence, 218 residues long: Imidazole glycerol phosphate synthase subunit HisH (218 aa).

A Glutamine amidotransferase type-1 domain is found at 1–213; it reads MTTIIDYGIG…AALPTTEEAG (213 aa). The Nucleophile role is filled by Cys-79. Active-site residues include His-188 and Glu-190.

As to quaternary structure, heterodimer of HisH and HisF.

It is found in the cytoplasm. It catalyses the reaction 5-[(5-phospho-1-deoxy-D-ribulos-1-ylimino)methylamino]-1-(5-phospho-beta-D-ribosyl)imidazole-4-carboxamide + L-glutamine = D-erythro-1-(imidazol-4-yl)glycerol 3-phosphate + 5-amino-1-(5-phospho-beta-D-ribosyl)imidazole-4-carboxamide + L-glutamate + H(+). The enzyme catalyses L-glutamine + H2O = L-glutamate + NH4(+). The protein operates within amino-acid biosynthesis; L-histidine biosynthesis; L-histidine from 5-phospho-alpha-D-ribose 1-diphosphate: step 5/9. Functionally, IGPS catalyzes the conversion of PRFAR and glutamine to IGP, AICAR and glutamate. The HisH subunit catalyzes the hydrolysis of glutamine to glutamate and ammonia as part of the synthesis of IGP and AICAR. The resulting ammonia molecule is channeled to the active site of HisF. This is Imidazole glycerol phosphate synthase subunit HisH from Salinibacter ruber (strain DSM 13855 / M31).